The sequence spans 512 residues: DEAD-box ATP-dependent RNA helicase 5 (512 aa).

Disordered stretches follow at residues 1–33 and 45–76; these read MGRSMLPEQQEDVSRKSKKEKKSKKDKKRKLEA and ATSTDEATKSSKKKRAKGDLGQGEEAENGGGK. Residues 14–45 are a coiled coil; sequence SRKSKKEKKSKKDKKRKLEAEAEVVVVEAAAA. The segment covering 16 to 30 has biased composition (basic residues); that stretch reads KSKKEKKSKKDKKRK. Positions 94–120 match the Q motif motif; that stretch reads SSFAATALPPQVLDCCKGFERPSPIQA. The 178-residue stretch at 123 to 300 folds into the Helicase ATP-binding domain; that stretch reads WPYLLDGRDF…QEFMDPNPIK (178 aa). 136–143 lines the ATP pocket; that stretch reads AATGSGKT. The short motif at 248-251 is the DEAD box element; that stretch reads DEAD. Residues 333–476 enclose the Helicase C-terminal domain; sequence LLDKYHKAQR…VVPPALTKFG (144 aa).

It belongs to the DEAD box helicase family. DDX5/DBP2 subfamily.

It localises to the nucleus. The protein localises to the nucleolus. The catalysed reaction is ATP + H2O = ADP + phosphate + H(+). Its function is as follows. ATP-dependent RNA helicase required for 60S ribosomal subunit synthesis. Involved in efficient pre-rRNA processing, predominantly at site A3, which is necessary for the normal formation of 25S and 5.8S rRNAs. This chain is DEAD-box ATP-dependent RNA helicase 5, found in Oryza sativa subsp. japonica (Rice).